The following is a 274-amino-acid chain: Nitrogenase iron protein (274 aa).

8–15 (GKGGIGKS) lines the ATP pocket. A [4Fe-4S] cluster-binding site is contributed by C94. R97 carries the post-translational modification ADP-ribosylarginine; by dinitrogenase reductase ADP-ribosyltransferase. C131 is a binding site for [4Fe-4S] cluster.

This sequence belongs to the NifH/BchL/ChlL family. In terms of assembly, homodimer. It depends on [4Fe-4S] cluster as a cofactor. In terms of processing, the reversible ADP-ribosylation of Arg-97 inactivates the nitrogenase reductase and regulates nitrogenase activity.

The enzyme catalyses N2 + 8 reduced [2Fe-2S]-[ferredoxin] + 16 ATP + 16 H2O = H2 + 8 oxidized [2Fe-2S]-[ferredoxin] + 2 NH4(+) + 16 ADP + 16 phosphate + 6 H(+). Functionally, the key enzymatic reactions in nitrogen fixation are catalyzed by the nitrogenase complex, which has 2 components: the iron protein and the molybdenum-iron protein. The polypeptide is Nitrogenase iron protein (Solidesulfovibrio magneticus (strain ATCC 700980 / DSM 13731 / RS-1) (Desulfovibrio magneticus)).